A 187-amino-acid polypeptide reads, in one-letter code: Elongation factor P (187 aa).

This sequence belongs to the elongation factor P family.

The protein localises to the cytoplasm. The protein operates within protein biosynthesis; polypeptide chain elongation. Functionally, involved in peptide bond synthesis. Stimulates efficient translation and peptide-bond synthesis on native or reconstituted 70S ribosomes in vitro. Probably functions indirectly by altering the affinity of the ribosome for aminoacyl-tRNA, thus increasing their reactivity as acceptors for peptidyl transferase. The polypeptide is Elongation factor P (Magnetococcus marinus (strain ATCC BAA-1437 / JCM 17883 / MC-1)).